We begin with the raw amino-acid sequence, 717 residues long: Transport/processing ATP-binding protein ComA (717 aa).

Residues 11–138 enclose the Peptidase C39 domain; it reads QVDQMDCGVA…EEWTGVTLFM (128 aa). The active site involves Cys17. Transmembrane regions (helical) follow at residues 18-38, 166-186, 205-225, 237-257, 281-301, 306-326, and 397-417; these read GVASLAMVFGYYGSYYFLAHL, GLIANIVLATLLVTVINIVGS, LGIISIGLVIVYILQQILSYA, LSIDVILSYIKHVFHLPMSFF, STILSIFLDVSTVVIISLVLF, NLFFMTLLALPIYTVIIFAFM, and VAHLLLNVGILWMGAVLVMDG. Positions 168–450 constitute an ABC transmembrane type-1 domain; sequence IANIVLATLL…IINLQTKLQT (283 aa). An ABC transporter domain is found at 484–717; it reads MTFKQVHYKY…GGFYAHLVNS (234 aa). ATP is bound at residue 517-524; that stretch reads GISGSGKT.

The protein belongs to the ABC transporter superfamily. HlyB family.

The protein localises to the cell membrane. Functionally, required for induction of competence. Seems to transport the competence-stimulating peptide (CSP). The sequence is that of Transport/processing ATP-binding protein ComA (comA) from Streptococcus pneumoniae (strain ATCC BAA-255 / R6).